The chain runs to 904 residues: Nitrate reductase [NADH] 1 (904 aa).

Composition is skewed to polar residues over residues 1–10 and 39–50; these read MAASVENRQF and STNFQKKPNSTI. The tract at residues 1 to 65 is disordered; the sequence is MAASVENRQF…SSEDDDDDDE (65 aa). Acidic residues predominate over residues 56–65; that stretch reads SSEDDDDDDE. A Mo-molybdopterin-binding site is contributed by cysteine 183. Positions 531-606 constitute a Cytochrome b5 heme-binding domain; it reads SKMYSMSEVR…LEEFRIGELL (76 aa). Residues histidine 566 and histidine 589 each contribute to the heme site. Residues 647–759 form the FAD-binding FR-type domain; sequence REKIPCKLID…KGPLGHIEYQ (113 aa). Residues 699–702, 716–720, phenylalanine 721, phenylalanine 728, 733–735, and threonine 786 contribute to the FAD site; these read RAYT, VVKIY, and QMS.

Belongs to the nitrate reductase family. As to quaternary structure, homodimer. Requires FAD as cofactor. Heme is required as a cofactor. It depends on Mo-molybdopterin as a cofactor.

It catalyses the reaction nitrite + NAD(+) + H2O = nitrate + NADH + H(+). Regulated by the nitrogen source and controlled by the circadian rhythm. Functionally, nitrate reductase is a key enzyme involved in the first step of nitrate assimilation in plants, fungi and bacteria. The protein is Nitrate reductase [NADH] 1 (NIA1) of Nicotiana tabacum (Common tobacco).